Here is a 200-residue protein sequence, read N- to C-terminus: Lipopolysaccharide core heptose(II)-phosphate phosphatase (200 aa).

An N-terminal signal peptide occupies residues 1–25 (MLAFCRSSLKSKKYFIILLALAAIA).

It belongs to the phosphoglycerate mutase family. Ais subfamily.

It is found in the periplasm. The protein operates within bacterial outer membrane biogenesis; lipopolysaccharide metabolism. Catalyzes the dephosphorylation of heptose(II) of the outer membrane lipopolysaccharide core. This chain is Lipopolysaccharide core heptose(II)-phosphate phosphatase, found in Shigella flexneri serotype 5b (strain 8401).